We begin with the raw amino-acid sequence, 423 residues long: Putative competence-damage inducible protein (423 aa).

This sequence belongs to the CinA family.

In Streptococcus pyogenes serotype M12 (strain MGAS2096), this protein is Putative competence-damage inducible protein.